The sequence spans 268 residues: 1D-myo-inositol 2-acetamido-2-deoxy-alpha-D-glucopyranoside deacetylase (268 aa).

Positions 7, 10, and 142 each coordinate Zn(2+).

This sequence belongs to the MshB deacetylase family. It depends on Zn(2+) as a cofactor.

It catalyses the reaction 1D-myo-inositol 2-acetamido-2-deoxy-alpha-D-glucopyranoside + H2O = 1D-myo-inositol 2-amino-2-deoxy-alpha-D-glucopyranoside + acetate. In terms of biological role, catalyzes the deacetylation of 1D-myo-inositol 2-acetamido-2-deoxy-alpha-D-glucopyranoside (GlcNAc-Ins) in the mycothiol biosynthesis pathway. The protein is 1D-myo-inositol 2-acetamido-2-deoxy-alpha-D-glucopyranoside deacetylase of Saccharomonospora viridis (strain ATCC 15386 / DSM 43017 / JCM 3036 / CCUG 5913 / NBRC 12207 / NCIMB 9602 / P101) (Thermoactinomyces viridis).